A 297-amino-acid chain; its full sequence is Protein muscleblind (297 aa).

C3H1-type zinc fingers lie at residues 18–46 (WLQL…HPPA) and 52–80 (NGKV…HPPQ).

The protein belongs to the muscleblind family. As to expression, expressed in embryonic muscle cells.

The protein localises to the nucleus. In terms of biological role, required for terminal differentiation of photoreceptor cells. Vital for embryonic development. The chain is Protein muscleblind (mbl) from Drosophila melanogaster (Fruit fly).